The following is a 322-amino-acid chain: MNNAIVLNNVNTNLFKKDIINNFVNNLTKSTCSTIANMLAIDYTLRLNSKPEAEKYIKKCVTRLKSYLGMRVINDDNFSVALELFAIMITYEYENEQNKDNILEQSQNVIAANLVEVYFSDAKITSSEKEKIKNIFKTLLKEKNFDKIINYAESHKKLFKMSVMYAMQKYNNIDQATIYIKKEFNKILDMSLAFTQKCNIFKQTTGKIVGAVCALLVGAISVATAGAAFSIIIVPTLIFAIRYAPALGEKIGEFILNNDNVIKLEQSNIDEFMKTLQNNKENLLSQEKVKKIKNNITVVPPTINSKLIKKVVNNKKNIDRIY.

A helical transmembrane segment spans residues V212–V234.

The protein resides in the membrane. This is an uncharacterized protein from Rickettsia prowazekii (strain Madrid E).